We begin with the raw amino-acid sequence, 431 residues long: Cyclic 2,3-diphosphoglycerate synthetase (431 aa).

This sequence belongs to the cyclic 2,3-diphosphoglycerate synthetase family.

The protein localises to the cytoplasm. It catalyses the reaction (2R)-2,3-bisphosphoglycerate + ATP + H(+) = cyclic (2R)-2,3-bisphosphoglycerate + ADP + phosphate. Catalyzes the formation of cyclic 2,3-diphosphoglycerate (cDPG) by formation of an intramolecular phosphoanhydride bond at the expense of ATP. The polypeptide is Cyclic 2,3-diphosphoglycerate synthetase (Pyrococcus furiosus (strain ATCC 43587 / DSM 3638 / JCM 8422 / Vc1)).